The primary structure comprises 492 residues: Fascin-2 (492 aa).

This sequence belongs to the fascin family. Expressed in the inner ear. Abundant in the utricle.

The protein localises to the cytoplasm. The protein resides in the cytoskeleton. It localises to the cell projection. Its subcellular location is the stereocilium. In terms of biological role, acts as an actin bundling protein. May play a pivotal role in photoreceptor cell-specific events, such as disk morphogenesis. Important for maintaining functional hair-cell bundles in the inner ear. May stiffen the longer stereocilia of hair-cell bundles in the inner ear enabling better force transmission to tip links. This chain is Fascin-2 (Fscn2), found in Mus musculus (Mouse).